Reading from the N-terminus, the 431-residue chain is Mannan endo-1,4-beta-mannosidase 5 (431 aa).

An N-terminal signal peptide occupies residues 1-24; it reads MVPTRNRPMLRILGFFICAAFIYL. N-linked (GlcNAc...) asparagine glycosylation is present at Asn45. Trp97 is a substrate binding site. Asn168 carries an N-linked (GlcNAc...) asparagine glycan. Position 213 (Asn213) interacts with substrate. Catalysis depends on Glu214, which acts as the Proton donor. Residue Asn282 is glycosylated (N-linked (GlcNAc...) asparagine). A substrate-binding site is contributed by Tyr294. N-linked (GlcNAc...) asparagine glycosylation is present at Asn301. The Nucleophile role is filled by Glu334. Trp376 is a binding site for substrate.

It belongs to the glycosyl hydrolase 5 (cellulase A) family. Expressed in stems.

The protein localises to the secreted. It carries out the reaction Random hydrolysis of (1-&gt;4)-beta-D-mannosidic linkages in mannans, galactomannans and glucomannans.. The chain is Mannan endo-1,4-beta-mannosidase 5 (MAN5) from Arabidopsis thaliana (Mouse-ear cress).